Here is an 810-residue protein sequence, read N- to C-terminus: S-adenosyl-L-methionine-dependent tRNA 4-demethylwyosine synthase (810 aa).

2 disordered regions span residues 86–116 and 156–176; these read NGGGKGGGCCSSKGGKKGGCCSSKGGKKGGC and RSSTPKVFSKNSSSNSRVGKK. Over residues 104–116 the composition is skewed to low complexity; it reads GCCSSKGGKKGGC. Residues 159-172 show a composition bias toward polar residues; that stretch reads TPKVFSKNSSSNSR. A Flavodoxin-like domain is found at 205-360; sequence IYVLYSSLQG…KIDEWTSLLA (156 aa). FMN is bound by residues 211–215 and 304–337; these read SLQGA and VLGLGDSESWPEKFCYQAKRADHWISRLGGRRIF. The segment covering 374–397 has biased composition (acidic residues); sequence DENADSEEDEEEGNGSDELGDVED. The tract at residues 374–407 is disordered; that stretch reads DENADSEEDEEEGNGSDELGDVEDIGGKGSNGKF. In terms of domain architecture, Radical SAM core spans 463 to 713; that stretch reads FNIASSRCME…ELQRRGLHYD (251 aa). Residues cysteine 479, cysteine 483, and cysteine 486 each contribute to the [4Fe-4S] cluster site. Lysine 496 participates in a covalent cross-link: Glycyl lysine isopeptide (Lys-Gly) (interchain with G-Cter in ubiquitin). Residues 782 to 810 are disordered; sequence RVYRKDKKKQNKENQETTTRETPLPPIPA.

The protein belongs to the TYW1 family. Requires [4Fe-4S] cluster as cofactor.

Its subcellular location is the endoplasmic reticulum. The enzyme catalyses N(1)-methylguanosine(37) in tRNA(Phe) + pyruvate + S-adenosyl-L-methionine = 4-demethylwyosine(37) in tRNA(Phe) + 5'-deoxyadenosine + L-methionine + CO2 + H2O. The protein operates within tRNA modification; wybutosine-tRNA(Phe) biosynthesis. Component of the wybutosine biosynthesis pathway. Wybutosine is a hyper modified guanosine with a tricyclic base found at the 3'-position adjacent to the anticodon of eukaryotic phenylalanine tRNA. Catalyzes the condensation of N-methylguanine with 2 carbon atoms from pyruvate to form the tricyclic 4-demethylwyosine, an intermediate in wybutosine biosynthesis. This is S-adenosyl-L-methionine-dependent tRNA 4-demethylwyosine synthase (TYW1) from Saccharomyces cerevisiae (strain ATCC 204508 / S288c) (Baker's yeast).